A 38-amino-acid chain; its full sequence is Photosystem II reaction center protein L (38 aa).

A helical transmembrane segment spans residues 17-37 (SLYWGLLLIFVLAVLFSNYSF).

It belongs to the PsbL family. In terms of assembly, PSII is composed of 1 copy each of membrane proteins PsbA, PsbB, PsbC, PsbD, PsbE, PsbF, PsbH, PsbI, PsbJ, PsbK, PsbL, PsbM, PsbT, PsbX, PsbY, PsbZ, Psb30/Ycf12, at least 3 peripheral proteins of the oxygen-evolving complex and a large number of cofactors. It forms dimeric complexes.

The protein localises to the plastid. The protein resides in the chloroplast thylakoid membrane. In terms of biological role, one of the components of the core complex of photosystem II (PSII). PSII is a light-driven water:plastoquinone oxidoreductase that uses light energy to abstract electrons from H(2)O, generating O(2) and a proton gradient subsequently used for ATP formation. It consists of a core antenna complex that captures photons, and an electron transfer chain that converts photonic excitation into a charge separation. This subunit is found at the monomer-monomer interface and is required for correct PSII assembly and/or dimerization. This chain is Photosystem II reaction center protein L, found in Bowenia serrulata (Byfield fern).